The sequence spans 234 residues: Glucosamine-6-phosphate deaminase (234 aa).

The active-site Proton acceptor; for enolization step is Asp62. Asn128 acts as the For ring-opening step in catalysis. His130 (proton acceptor; for ring-opening step) is an active-site residue. Glu135 serves as the catalytic For ring-opening step.

The protein belongs to the glucosamine/galactosamine-6-phosphate isomerase family. NagB subfamily.

The catalysed reaction is alpha-D-glucosamine 6-phosphate + H2O = beta-D-fructose 6-phosphate + NH4(+). It functions in the pathway amino-sugar metabolism; N-acetylneuraminate degradation; D-fructose 6-phosphate from N-acetylneuraminate: step 5/5. Functionally, catalyzes the reversible isomerization-deamination of glucosamine 6-phosphate (GlcN6P) to form fructose 6-phosphate (Fru6P) and ammonium ion. This chain is Glucosamine-6-phosphate deaminase, found in Ligilactobacillus salivarius (strain UCC118) (Lactobacillus salivarius).